Here is an 86-residue protein sequence, read N- to C-terminus: Small ribosomal subunit protein uS17 (86 aa).

Belongs to the universal ribosomal protein uS17 family. As to quaternary structure, part of the 30S ribosomal subunit.

Functionally, one of the primary rRNA binding proteins, it binds specifically to the 5'-end of 16S ribosomal RNA. The polypeptide is Small ribosomal subunit protein uS17 (Halorhodospira halophila (strain DSM 244 / SL1) (Ectothiorhodospira halophila (strain DSM 244 / SL1))).